We begin with the raw amino-acid sequence, 127 residues long: Large ribosomal subunit protein bL19 (127 aa).

Belongs to the bacterial ribosomal protein bL19 family.

Functionally, this protein is located at the 30S-50S ribosomal subunit interface and may play a role in the structure and function of the aminoacyl-tRNA binding site. This chain is Large ribosomal subunit protein bL19, found in Roseobacter denitrificans (strain ATCC 33942 / OCh 114) (Erythrobacter sp. (strain OCh 114)).